Consider the following 333-residue polypeptide: Biotin synthase (333 aa).

In terms of domain architecture, Radical SAM core spans 51 to 281 (HFGNQVSLCG…DVHITICGGR (231 aa)). [4Fe-4S] cluster-binding residues include C69, C73, and C76. C206 is a binding site for [2Fe-2S] cluster.

The protein belongs to the radical SAM superfamily. Biotin synthase family. In terms of assembly, homodimer. Requires [4Fe-4S] cluster as cofactor. It depends on [2Fe-2S] cluster as a cofactor.

It catalyses the reaction (4R,5S)-dethiobiotin + (sulfur carrier)-SH + 2 reduced [2Fe-2S]-[ferredoxin] + 2 S-adenosyl-L-methionine = (sulfur carrier)-H + biotin + 2 5'-deoxyadenosine + 2 L-methionine + 2 oxidized [2Fe-2S]-[ferredoxin]. It participates in cofactor biosynthesis; biotin biosynthesis; biotin from 7,8-diaminononanoate: step 2/2. Functionally, catalyzes the conversion of dethiobiotin (DTB) to biotin by the insertion of a sulfur atom into dethiobiotin via a radical-based mechanism. In Trichlorobacter lovleyi (strain ATCC BAA-1151 / DSM 17278 / SZ) (Geobacter lovleyi), this protein is Biotin synthase.